Consider the following 116-residue polypeptide: Large ribosomal subunit protein bL19 (116 aa).

Belongs to the bacterial ribosomal protein bL19 family.

Functionally, this protein is located at the 30S-50S ribosomal subunit interface and may play a role in the structure and function of the aminoacyl-tRNA binding site. This Chloroflexus aurantiacus (strain ATCC 29366 / DSM 635 / J-10-fl) protein is Large ribosomal subunit protein bL19.